The chain runs to 460 residues: MTTKNHKLWGGRFEAGLAQWVEEFGASISFDQKLAEFDLKGSIAHVTMLGEKGIISQEDAATIKAGLEDLLEEYKAGQLKFDVSNEDIHMNMESLLTAKIGPVAGKLHTARSRNDQVATDMHLYLKAKLDEVIEKLANLRTVLVDLADKHVHTIMPGYTHLQHAQPISFGHHLMAYYNMFTRDSERFIFNVKHTDLSPLGAAALAGTTFPIDREMTAQLMGFAEPYSNSLDAVSDRDFILEFLSNASILMMHMSRMCEEVISWCSHEYQFVTLSDTFSTGSSIMPQKKNPDMAELIRGKSGRVYANLFGLLTVMKALPLAYNKDLQEDKEGMFDTAETITVALDILAGMLSSMIVNDKHMAESTQKDFSNATELADYLASKGMPFRQAHEIVGKLILECSKNGHYLQDVPLERYQTISDLIEEDVYETLKSHTAVERRHSLGGTGFEQVKWQIAEAKKAL.

This sequence belongs to the lyase 1 family. Argininosuccinate lyase subfamily.

The protein localises to the cytoplasm. The catalysed reaction is 2-(N(omega)-L-arginino)succinate = fumarate + L-arginine. It functions in the pathway amino-acid biosynthesis; L-arginine biosynthesis; L-arginine from L-ornithine and carbamoyl phosphate: step 3/3. This Streptococcus mutans serotype c (strain ATCC 700610 / UA159) protein is Argininosuccinate lyase.